Consider the following 432-residue polypeptide: uncharacterized protein (432 aa).

Disordered stretches follow at residues 37–61, 127–151, and 298–378; these read DGIG…SADC, RDHD…DTRY, and SVSS…NHQC. Over residues 312–335 the composition is skewed to polar residues; it reads DSSTLANTQGFREDQSQQQHTPSP. Positions 341–366 are enriched in low complexity; it reads SSLSHQFHQSIHQSHQHHQSIYQSQH.

This is an uncharacterized protein from Arabidopsis thaliana (Mouse-ear cress).